The following is a 147-amino-acid chain: D-aminoacyl-tRNA deacylase (147 aa).

Positions Gly-136 to Pro-137 match the Gly-cisPro motif, important for rejection of L-amino acids motif.

This sequence belongs to the DTD family. As to quaternary structure, homodimer.

Its subcellular location is the cytoplasm. It catalyses the reaction glycyl-tRNA(Ala) + H2O = tRNA(Ala) + glycine + H(+). It carries out the reaction a D-aminoacyl-tRNA + H2O = a tRNA + a D-alpha-amino acid + H(+). Functionally, an aminoacyl-tRNA editing enzyme that deacylates mischarged D-aminoacyl-tRNAs. Also deacylates mischarged glycyl-tRNA(Ala), protecting cells against glycine mischarging by AlaRS. Acts via tRNA-based rather than protein-based catalysis; rejects L-amino acids rather than detecting D-amino acids in the active site. By recycling D-aminoacyl-tRNA to D-amino acids and free tRNA molecules, this enzyme counteracts the toxicity associated with the formation of D-aminoacyl-tRNA entities in vivo and helps enforce protein L-homochirality. The polypeptide is D-aminoacyl-tRNA deacylase (Streptococcus pneumoniae (strain Taiwan19F-14)).